Here is a 184-residue protein sequence, read N- to C-terminus: Putative manganese efflux pump MntP (184 aa).

The next 6 helical transmembrane spans lie at 12 to 32 (SIMAFALGMDAFSVGLGMGMI), 39 to 59 (IIYIGLVIGIFHMFMPLFGML), 63 to 83 (LLSGWLGLLATYIGGALLLVL), 99 to 119 (FIAPVGAGLVLFATSVSLDSF), 132 to 152 (VWMTILLFGFFSMILTWLGLL), and 164 to 184 (YSGALGGIILLAFGIKLLFPL).

Belongs to the MntP (TC 9.B.29) family.

The protein resides in the cell membrane. Functionally, probably functions as a manganese efflux pump. The protein is Putative manganese efflux pump MntP of Bacillus pumilus (strain SAFR-032).